The chain runs to 254 residues: Phosphoglycerate mutase 1 (254 aa).

Residues 10–17 (RHGESAWN) and 23–24 (SG) contribute to the substrate site. The active-site Tele-phosphohistidine intermediate is His-11. Phosphoserine occurs at positions 14 and 23. A Phosphotyrosine modification is found at Tyr-26. Ser-31 carries the post-translational modification Phosphoserine. Substrate-binding positions include Arg-62, 89–92 (ERHY), and Lys-100. Glu-89 serves as the catalytic Proton donor/acceptor. The residue at position 106 (Lys-106) is an N6-acetyllysine. 116-117 (RR) contributes to the substrate binding site. The residue at position 118 (Ser-118) is a Phosphoserine. 187 to 188 (GN) contributes to the substrate binding site. At Lys-251 the chain carries N6-acetyllysine; alternate. Lys-251 is subject to N6-succinyllysine; alternate. Residues Lys-253 and Lys-254 each carry the N6-acetyllysine modification.

The protein belongs to the phosphoglycerate mutase family. BPG-dependent PGAM subfamily. Homodimer. In terms of processing, acetylated at Lys-253, Lys-253 and Lys-254 under high glucose condition. Acetylation increases catalytic activity. Under glucose restriction SIRT1 levels dramatically increase and it deacetylates the enzyme.

The enzyme catalyses (2R)-2-phosphoglycerate = (2R)-3-phosphoglycerate. It carries out the reaction (2R)-3-phospho-glyceroyl phosphate = (2R)-2,3-bisphosphoglycerate + H(+). In terms of biological role, catalyzes the interconversion of 2-phosphoglycerate and 3-phosphoglyceratea crucial step in glycolysis, by using 2,3-bisphosphoglycerate. Also catalyzes the interconversion of (2R)-2,3-bisphosphoglycerate and (2R)-3-phospho-glyceroyl phosphate. In Mus musculus (Mouse), this protein is Phosphoglycerate mutase 1.